The primary structure comprises 377 residues: Succinyl-diaminopimelate desuccinylase (377 aa).

H67 contributes to the Zn(2+) binding site. The active site involves D69. Position 100 (D100) interacts with Zn(2+). E134 (proton acceptor) is an active-site residue. E135, E163, and H349 together coordinate Zn(2+).

Belongs to the peptidase M20A family. DapE subfamily. Homodimer. Zn(2+) serves as cofactor. Requires Co(2+) as cofactor.

It carries out the reaction N-succinyl-(2S,6S)-2,6-diaminopimelate + H2O = (2S,6S)-2,6-diaminopimelate + succinate. It participates in amino-acid biosynthesis; L-lysine biosynthesis via DAP pathway; LL-2,6-diaminopimelate from (S)-tetrahydrodipicolinate (succinylase route): step 3/3. Functionally, catalyzes the hydrolysis of N-succinyl-L,L-diaminopimelic acid (SDAP), forming succinate and LL-2,6-diaminopimelate (DAP), an intermediate involved in the bacterial biosynthesis of lysine and meso-diaminopimelic acid, an essential component of bacterial cell walls. The chain is Succinyl-diaminopimelate desuccinylase from Mannheimia succiniciproducens (strain KCTC 0769BP / MBEL55E).